Here is a 104-residue protein sequence, read N- to C-terminus: Large ribosomal subunit protein bL21 (104 aa).

The protein belongs to the bacterial ribosomal protein bL21 family. Part of the 50S ribosomal subunit. Contacts protein L20.

Its function is as follows. This protein binds to 23S rRNA in the presence of protein L20. The polypeptide is Large ribosomal subunit protein bL21 (Leptospira interrogans serogroup Icterohaemorrhagiae serovar copenhageni (strain Fiocruz L1-130)).